Reading from the N-terminus, the 154-residue chain is Probable ubiquitin-conjugating enzyme E2 31 (154 aa).

The UBC core domain occupies K8–N153. C91 acts as the Glycyl thioester intermediate in catalysis.

It belongs to the ubiquitin-conjugating enzyme family.

The enzyme catalyses S-ubiquitinyl-[E1 ubiquitin-activating enzyme]-L-cysteine + [E2 ubiquitin-conjugating enzyme]-L-cysteine = [E1 ubiquitin-activating enzyme]-L-cysteine + S-ubiquitinyl-[E2 ubiquitin-conjugating enzyme]-L-cysteine.. It participates in protein modification; protein ubiquitination. Its function is as follows. Accepts the ubiquitin from the E1 complex and catalyzes its covalent attachment to other proteins. The protein is Probable ubiquitin-conjugating enzyme E2 31 (UBC31) of Arabidopsis thaliana (Mouse-ear cress).